The following is a 116-amino-acid chain: Large ribosomal subunit protein uL18 (116 aa).

This sequence belongs to the universal ribosomal protein uL18 family. Part of the 50S ribosomal subunit; part of the 5S rRNA/L5/L18/L25 subcomplex. Contacts the 5S and 23S rRNAs.

This is one of the proteins that bind and probably mediate the attachment of the 5S RNA into the large ribosomal subunit, where it forms part of the central protuberance. This chain is Large ribosomal subunit protein uL18, found in Alcanivorax borkumensis (strain ATCC 700651 / DSM 11573 / NCIMB 13689 / SK2).